A 444-amino-acid polypeptide reads, in one-letter code: Tol-Pal system protein TolB (444 aa).

An N-terminal signal peptide occupies residues 1–19 (MRNIIYFILSLLFSVTSYA).

This sequence belongs to the TolB family. As to quaternary structure, the Tol-Pal system is composed of five core proteins: the inner membrane proteins TolA, TolQ and TolR, the periplasmic protein TolB and the outer membrane protein Pal. They form a network linking the inner and outer membranes and the peptidoglycan layer.

It is found in the periplasm. Its function is as follows. Part of the Tol-Pal system, which plays a role in outer membrane invagination during cell division and is important for maintaining outer membrane integrity. This chain is Tol-Pal system protein TolB, found in Rickettsia rickettsii (strain Sheila Smith).